Here is an 800-residue protein sequence, read N- to C-terminus: Phenylalanine--tRNA ligase beta subunit (800 aa).

Positions 39–154 (TKDIKNLVVG…ESQVPGTDAL (116 aa)) constitute a tRNA-binding domain. In terms of domain architecture, B5 spans 408 to 483 (AFITPIDITA…RIYGYDDIPS (76 aa)). The Mg(2+) site is built by aspartate 461, aspartate 467, glutamate 470, and glutamate 471. The region spanning 708-800 (PRFPGMSRDI…ALIEQGAVIR (93 aa)) is the FDX-ACB domain.

Belongs to the phenylalanyl-tRNA synthetase beta subunit family. Type 1 subfamily. In terms of assembly, tetramer of two alpha and two beta subunits. It depends on Mg(2+) as a cofactor.

The protein resides in the cytoplasm. It catalyses the reaction tRNA(Phe) + L-phenylalanine + ATP = L-phenylalanyl-tRNA(Phe) + AMP + diphosphate + H(+). This is Phenylalanine--tRNA ligase beta subunit from Staphylococcus aureus (strain Mu50 / ATCC 700699).